Reading from the N-terminus, the 814-residue chain is ATP-dependent 6-phosphofructokinase 1 (814 aa).

Residues 1-420 (MDADASTITP…NLETYKLLTK (420 aa)) form an N-terminal catalytic PFK domain 1 region. Residues glycine 55, 118–119 (RS), and 148–151 (GDGS) each bind ATP. Aspartate 149 contributes to the Mg(2+) binding site. Residues 194–196 (SID), arginine 231, 238–240 (MGR), glutamate 294, arginine 322, and 328–331 (HVQR) each bind substrate. The active-site Proton acceptor is the aspartate 196. The interdomain linker stretch occupies residues 421–435 (MRTVEKDNLSEGHKF). The interval 436–814 (NVAVINVGAP…EEESADSHMF (379 aa)) is C-terminal regulatory PFK domain 2. Beta-D-fructose 2,6-bisphosphate contacts are provided by residues lysine 505, 563 to 567 (TISNN), arginine 601, 608 to 610 (MGG), glutamate 664, arginine 690, 696 to 699 (HVQQ), and arginine 771.

The protein belongs to the phosphofructokinase type A (PFKA) family. ATP-dependent PFK group I subfamily. Eukaryotic two domain clade 'E' sub-subfamily. As to quaternary structure, homotetramer. The cofactor is Mg(2+).

The protein localises to the cytoplasm. It carries out the reaction beta-D-fructose 6-phosphate + ATP = beta-D-fructose 1,6-bisphosphate + ADP + H(+). The protein operates within carbohydrate degradation; glycolysis; D-glyceraldehyde 3-phosphate and glycerone phosphate from D-glucose: step 3/4. Its activity is regulated as follows. Allosterically activated by ADP, AMP, or fructose 2,6-bisphosphate, and allosterically inhibited by ATP or citrate. Catalyzes the phosphorylation of D-fructose 6-phosphate to fructose 1,6-bisphosphate by ATP, the first committing step of glycolysis. The chain is ATP-dependent 6-phosphofructokinase 1 from Caenorhabditis elegans.